The following is a 215-amino-acid chain: DNA repair and recombination protein RadB (215 aa).

The protein belongs to the eukaryotic RecA-like protein family. RadB subfamily.

Functionally, involved in DNA repair and in homologous recombination. May regulate the cleavage reactions of the branch-structured DNA. Has a very weak ATPase activity that is not stimulated by DNA. Binds DNA but does not promote DNA strands exchange. The chain is DNA repair and recombination protein RadB from Methanococcus maripaludis (strain C7 / ATCC BAA-1331).